Reading from the N-terminus, the 118-residue chain is Large ribosomal subunit protein bL19 (118 aa).

This sequence belongs to the bacterial ribosomal protein bL19 family.

In terms of biological role, this protein is located at the 30S-50S ribosomal subunit interface and may play a role in the structure and function of the aminoacyl-tRNA binding site. This chain is Large ribosomal subunit protein bL19 (rplS), found in Helicobacter pylori (strain J99 / ATCC 700824) (Campylobacter pylori J99).